Reading from the N-terminus, the 150-residue chain is Large ribosomal subunit protein bL9 (150 aa).

This sequence belongs to the bacterial ribosomal protein bL9 family.

Binds to the 23S rRNA. This chain is Large ribosomal subunit protein bL9, found in Hydrogenovibrio crunogenus (strain DSM 25203 / XCL-2) (Thiomicrospira crunogena).